A 119-amino-acid polypeptide reads, in one-letter code: Small ribosomal subunit protein uS13 (119 aa).

Positions 94–119 (GLPVRGQRTQTNARTRKGPRRGPAGK) are disordered.

This sequence belongs to the universal ribosomal protein uS13 family. Part of the 30S ribosomal subunit. Forms a loose heterodimer with protein S19. Forms two bridges to the 50S subunit in the 70S ribosome.

Functionally, located at the top of the head of the 30S subunit, it contacts several helices of the 16S rRNA. In the 70S ribosome it contacts the 23S rRNA (bridge B1a) and protein L5 of the 50S subunit (bridge B1b), connecting the 2 subunits; these bridges are implicated in subunit movement. Contacts the tRNAs in the A and P-sites. The protein is Small ribosomal subunit protein uS13 of Alkalilimnicola ehrlichii (strain ATCC BAA-1101 / DSM 17681 / MLHE-1).